The primary structure comprises 480 residues: MNLTKVWNTTLGSLQVQLPRHEYNTWVRGANLLDIDNGVAIIRAPNAFIKEGLESRYLTTLREQLGSVVGFPVDVRIVLATSESERIDGASINGRHAARDTRKSDHHAPLSGGYGNGISHPLERASVHQLELHRAVRSSMLNPRYTFDRFIIGPSNRLANAACMAVAEHPAQAYNPLFLYGGVGLGKTHLLHAIGNFVLDRDPEVNVLYVSSETFTNDLINSIRRQQTEEFRIRYRNIDILLIDDIQFIAGKEQTQEEFFHTFNTLHSAGKQIIISSDRSPKAILTLEERLRSRFEWGLIVDVQMPDLETRTAILRAKAEQSPVPVPQPVIDFLAQRIQSHIRELEGCLNRVTAYAQMYNIPVTIEVATAALSELLDTNRRKRVTPEAILREVAAFYSVDLRSLQGRGRSRNIVTPRHVAMYLLREETDSSLMEIGQLLGGRDHTTVMYGCDKIAEEINTDARLRQEVAAIRERLMNSAV.

Positions 1–71 are domain I, interacts with DnaA modulators; it reads MNLTKVWNTT…REQLGSVVGF (71 aa). Positions 71–139 are domain II; it reads FPVDVRIVLA…LELHRAVRSS (69 aa). The disordered stretch occupies residues 91-115; that stretch reads SINGRHAARDTRKSDHHAPLSGGYG. Over residues 97-108 the composition is skewed to basic and acidic residues; the sequence is AARDTRKSDHHA. Residues 140 to 356 form a domain III, AAA+ region region; it reads MLNPRYTFDR…GCLNRVTAYA (217 aa). ATP is bound by residues Gly184, Gly186, Lys187, and Thr188. Residues 357 to 480 are domain IV, binds dsDNA; the sequence is QMYNIPVTIE…IRERLMNSAV (124 aa).

The protein belongs to the DnaA family. Oligomerizes as a right-handed, spiral filament on DNA at oriC.

The protein localises to the cytoplasm. Plays an essential role in the initiation and regulation of chromosomal replication. ATP-DnaA binds to the origin of replication (oriC) to initiate formation of the DNA replication initiation complex once per cell cycle. Binds the DnaA box (a 9 base pair repeat at the origin) and separates the double-stranded (ds)DNA. Forms a right-handed helical filament on oriC DNA; dsDNA binds to the exterior of the filament while single-stranded (ss)DNA is stabiized in the filament's interior. The ATP-DnaA-oriC complex binds and stabilizes one strand of the AT-rich DNA unwinding element (DUE), permitting loading of DNA polymerase. After initiation quickly degrades to an ADP-DnaA complex that is not apt for DNA replication. Binds acidic phospholipids. The chain is Chromosomal replication initiator protein DnaA from Roseiflexus castenholzii (strain DSM 13941 / HLO8).